Reading from the N-terminus, the 500-residue chain is NAD(P)H-quinone oxidoreductase chain 4, chloroplastic (500 aa).

A run of 14 helical transmembrane segments spans residues 4-24, 37-57, 87-107, 113-130, 134-154, 167-187, 208-228, 242-262, 272-292, 305-325, 330-350, 386-406, 411-431, and 462-482; these read FPWLTIIVVFPIFAGSLIFFL, ICICILELLLTTYAFCYHFQL, IGPILLTGFITTLATLAAWPI, LFHFIMLAMYSGQIGSFS, LLLFFIMWELELIPVYLLLAM, FILYTAGGSVFLLMGVLGVAL, VLEIIFYIGFFIAFAVKLPII, HYSTCMLLAGILLKMGAYGLI, AHSIFSPWLMIIGTIQIIYAA, IAYSSVSHMGFIIIGISSLTD, GALLQIISHGFIGAALFFLAG, LALPGMSGFVAELIVFFGIIT, VLIPKILITFVMAIGMILTPI, and LFLSISIFLPVIGIGIYPDFV.

This sequence belongs to the complex I subunit 4 family.

The protein resides in the plastid. Its subcellular location is the chloroplast thylakoid membrane. It carries out the reaction a plastoquinone + NADH + (n+1) H(+)(in) = a plastoquinol + NAD(+) + n H(+)(out). The enzyme catalyses a plastoquinone + NADPH + (n+1) H(+)(in) = a plastoquinol + NADP(+) + n H(+)(out). The protein is NAD(P)H-quinone oxidoreductase chain 4, chloroplastic of Atropa belladonna (Belladonna).